Consider the following 506-residue polypeptide: MTVQNVRVRVAPSPTGDPHVGTAYMALFNEVFARKYNGQMILRIEDTDQTRSRDDYEANIFSALKWCGIRWDEGPDVGGAYGPYRQSERTEIYKKYAEILLQTDCAYKCFATPQELQEMRAVASTLGYRGGYDRRYRYLSPEEVRQREEQGQPYTIRLKVPLTGESVFEDQCKGRVVFPWADVDDQVLVKSDGFPTYHFANVVDDHLMGITHVLRGEEWLSSTPKHLLLYKAFGWEPPQFFHMPLLLNPDGSKLSKRKNPTSIFYYRDAGYKKEAFMNFLTLMGYSMEGDEEIYSMQRLIEAFDPKRIGRSGAVFDIRKLDWMNKHYLNHEGSPESLLQELKGWLWNDEFLLKILPLCQSRITTLADFVGLTSFFFTAIPQYSKEELLPSSLKQEQAAVMLYSLVKYLEKKDLWEKDFFYQGSKWLAEAFQVHHKKAVIPLLYVAITGAKQGLPLFDSMELLGKARTRARLTYAQNLLGGVSKKVQQQVDKALQDQPLEDIRFLDF.

The 'HIGH' region signature appears at 12-22 (PSPTGDPHVGT). The short motif at 253 to 257 (KLSKR) is the 'KMSKS' region element. An ATP-binding site is contributed by lysine 256.

Belongs to the class-I aminoacyl-tRNA synthetase family. Glutamate--tRNA ligase type 1 subfamily. Monomer.

It is found in the cytoplasm. The catalysed reaction is tRNA(Glu) + L-glutamate + ATP = L-glutamyl-tRNA(Glu) + AMP + diphosphate. Functionally, catalyzes the attachment of glutamate to tRNA(Glu) in a two-step reaction: glutamate is first activated by ATP to form Glu-AMP and then transferred to the acceptor end of tRNA(Glu). The polypeptide is Glutamate--tRNA ligase (Chlamydia trachomatis serovar L2 (strain ATCC VR-902B / DSM 19102 / 434/Bu)).